Reading from the N-terminus, the 90-residue chain is DNA-directed RNA polymerase subunit Rpo5 (90 aa).

This sequence belongs to the archaeal Rpo5/eukaryotic RPB5 RNA polymerase subunit family. Part of the RNA polymerase complex.

It is found in the cytoplasm. It carries out the reaction RNA(n) + a ribonucleoside 5'-triphosphate = RNA(n+1) + diphosphate. Functionally, DNA-dependent RNA polymerase (RNAP) catalyzes the transcription of DNA into RNA using the four ribonucleoside triphosphates as substrates. The polypeptide is DNA-directed RNA polymerase subunit Rpo5 (Aeropyrum pernix (strain ATCC 700893 / DSM 11879 / JCM 9820 / NBRC 100138 / K1)).